A 302-amino-acid chain; its full sequence is Nucleotide-binding protein BceJ2315_08000 (302 aa).

Position 8–15 (8–15 (GISGSGKS)) interacts with ATP. 57 to 60 (DARS) contributes to the GTP binding site.

Belongs to the RapZ-like family.

Functionally, displays ATPase and GTPase activities. The chain is Nucleotide-binding protein BceJ2315_08000 from Burkholderia cenocepacia (strain ATCC BAA-245 / DSM 16553 / LMG 16656 / NCTC 13227 / J2315 / CF5610) (Burkholderia cepacia (strain J2315)).